The sequence spans 422 residues: Adenylosuccinate synthetase (422 aa).

Residues 11-17 (GDEGKGK) and 39-41 (GHT) contribute to the GTP site. The active-site Proton acceptor is the aspartate 12. Residues aspartate 12 and glycine 39 each contribute to the Mg(2+) site. Residues 12–15 (DEGK), 37–40 (NAGH), threonine 129, arginine 143, asparagine 220, threonine 235, and arginine 299 each bind IMP. Histidine 40 functions as the Proton donor in the catalytic mechanism. Substrate is bound at residue 295-301 (VTTGRKR). GTP contacts are provided by residues arginine 301, 327 to 329 (KLD), and 410 to 412 (GTG).

It belongs to the adenylosuccinate synthetase family. Homodimer. Requires Mg(2+) as cofactor.

Its subcellular location is the cytoplasm. It carries out the reaction IMP + L-aspartate + GTP = N(6)-(1,2-dicarboxyethyl)-AMP + GDP + phosphate + 2 H(+). It participates in purine metabolism; AMP biosynthesis via de novo pathway; AMP from IMP: step 1/2. In terms of biological role, plays an important role in the de novo pathway and in the salvage pathway of purine nucleotide biosynthesis. Catalyzes the first committed step in the biosynthesis of AMP from IMP. The protein is Adenylosuccinate synthetase of Arthroderma otae (strain ATCC MYA-4605 / CBS 113480) (Microsporum canis).